A 276-amino-acid polypeptide reads, in one-letter code: DnaJ homolog subfamily C member 27-B (276 aa).

Residues 23–30, 71–75, and 137–140 contribute to the GTP site; these read GNAEVGKS, DMAGH, and NKID. Positions 220 to 276 constitute a J domain; the sequence is DSWDMLGVKPGATRDEVNKAYRKLAVLLHPDKCVAPGSEDAFKAVVNARTALLKNIK.

The protein belongs to the small GTPase superfamily. Rab family.

It localises to the nucleus. In terms of biological role, GTPase possibly involved in regulation of the MEK/ERK pathway. The chain is DnaJ homolog subfamily C member 27-B (dnajc27-b) from Xenopus laevis (African clawed frog).